The following is a 522-amino-acid chain: Cytochrome P450 4e5, mitochondrial (522 aa).

Heme contacts are provided by Glu-307 and Cys-443.

Belongs to the cytochrome P450 family. The cofactor is heme.

It localises to the mitochondrion. Functionally, probably involved in steroid hormones biosynthesis. The chain is Cytochrome P450 4e5, mitochondrial (Cyp4e5) from Drosophila mettleri (Fruit fly).